The sequence spans 104 residues: Putative protein 22K (104 aa).

Residues 35–104 (YKQLEKELGE…KAPAAKAPSK (70 aa)) are disordered. A compositionally biased stretch (acidic residues) spans 60 to 78 (PLSEGELEEISEEEEEEGE). A compositionally biased stretch (low complexity) spans 94–104 (SKAPAAKAPSK).

This chain is Putative protein 22K, found in Snake adenovirus serotype 1 (SnAdV-1).